A 149-amino-acid chain; its full sequence is Transcriptional regulator MraZ (149 aa).

SpoVT-AbrB domains follow at residues 6–52 (HAHR…TPPD) and 81–124 (SEEV…DKRE).

Belongs to the MraZ family. Forms oligomers.

It is found in the cytoplasm. The protein resides in the nucleoid. This chain is Transcriptional regulator MraZ, found in Maridesulfovibrio salexigens (strain ATCC 14822 / DSM 2638 / NCIMB 8403 / VKM B-1763) (Desulfovibrio salexigens).